Here is a 403-residue protein sequence, read N- to C-terminus: Pantothenate kinase (403 aa).

Phosphoserine occurs at positions 80, 82, and 84.

Belongs to the type II pantothenate kinase family.

Its subcellular location is the cytoplasm. It localises to the nucleus. It catalyses the reaction (R)-pantothenate + ATP = (R)-4'-phosphopantothenate + ADP + H(+). It participates in cofactor biosynthesis; coenzyme A biosynthesis; CoA from (R)-pantothenate: step 1/5. Regulated by feedback inhibition by malonyl-CoA. In terms of biological role, plays a role in the physiological regulation of the intracellular CoA concentration. This is Pantothenate kinase from Schizosaccharomyces pombe (strain 972 / ATCC 24843) (Fission yeast).